A 419-amino-acid polypeptide reads, in one-letter code: Zinc finger protein Pegasus (419 aa).

A Glycyl lysine isopeptide (Lys-Gly) (interchain with G-Cter in SUMO2) cross-link involves residue lysine 5. 3 consecutive C2H2-type zinc fingers follow at residues 82-104, 110-132, and 138-161; these read LKCR…IRIH, HRCH…MRSH, and YKCE…RRKH. Lysine 185 is covalently cross-linked (Glycyl lysine isopeptide (Lys-Gly) (interchain with G-Cter in SUMO2)). Polar residues predominate over residues 223 to 236; the sequence is QTDSYESMAKTTPT. Disordered regions lie at residues 223-245 and 288-356; these read QTDS…DPQE and MQQP…PTLP. Positions 289–311 are enriched in low complexity; the sequence is QQPSAQAVVSAVSASLPQSSSPA. Polar residues predominate over residues 332–349; sequence SEPSAHTSTPSMGNSQPS. 2 C2H2-type zinc fingers span residues 364–386 and 392–416; these read HHCQ…MGCH and FQCN…RGQH.

The protein belongs to the Ikaros C2H2-type zinc-finger protein family. In terms of assembly, self-associates. Interacts with other family members; IKZF1, IKZF2, IKZF3 and IKZF4.

Its subcellular location is the nucleus. Functionally, transcriptional repressor that binds the core 5'GNNTGTNG-3' DNA consensus sequence. Involved in megakaryocyte differentiation. The polypeptide is Zinc finger protein Pegasus (IKZF5) (Bos taurus (Bovine)).